The sequence spans 377 residues: Probable trehalose-phosphate phosphatase G (377 aa).

The segment at 1–20 (MDLNINKTTPVLSDPTTPVS) is disordered.

The protein belongs to the trehalose phosphatase family. A divalent metal cation is required as a cofactor.

It catalyses the reaction alpha,alpha-trehalose 6-phosphate + H2O = alpha,alpha-trehalose + phosphate. The protein operates within glycan biosynthesis; trehalose biosynthesis. In terms of biological role, removes the phosphate from trehalose 6-phosphate to produce free trehalose. Trehalose accumulation in plant may improve abiotic stress tolerance. The sequence is that of Probable trehalose-phosphate phosphatase G (TPPG) from Arabidopsis thaliana (Mouse-ear cress).